The following is a 326-amino-acid chain: Vitamin B12 import system permease protein BtuC (326 aa).

The next 9 membrane-spanning stretches (helical) occupy residues Leu-19–Leu-39, Leu-61–Phe-81, Pro-88–Gly-108, Leu-112–Leu-132, Leu-146–Phe-166, Gly-184–Ile-204, Gly-240–Ile-260, Val-274–Ala-294, and Glu-302–Leu-322.

It belongs to the binding-protein-dependent transport system permease family. FecCD subfamily. As to quaternary structure, the complex is composed of two ATP-binding proteins (BtuD), two transmembrane proteins (BtuC) and a solute-binding protein (BtuF).

The protein resides in the cell inner membrane. Part of the ABC transporter complex BtuCDF involved in vitamin B12 import. Involved in the translocation of the substrate across the membrane. In Escherichia coli O6:K15:H31 (strain 536 / UPEC), this protein is Vitamin B12 import system permease protein BtuC.